The chain runs to 178 residues: Large ribosomal subunit protein uL6 (178 aa).

Belongs to the universal ribosomal protein uL6 family. Part of the 50S ribosomal subunit.

This protein binds to the 23S rRNA, and is important in its secondary structure. It is located near the subunit interface in the base of the L7/L12 stalk, and near the tRNA binding site of the peptidyltransferase center. This is Large ribosomal subunit protein uL6 from Helicobacter pylori (strain Shi470).